Reading from the N-terminus, the 152-residue chain is MKIILRKDVATLGDAGEVVTVKNGYANNYLIPQGYAIRATEGTLKALETEKKQQARKIELQRTNARELAAKIEQMTLKVLAKAGESGKLFGTVTAGDIAEALKAQGVDIDRRKIHLEAPIKALGKYEADAKLFMDITAKLSIEVEAEGASEE.

It belongs to the bacterial ribosomal protein bL9 family.

Its function is as follows. Binds to the 23S rRNA. The sequence is that of Large ribosomal subunit protein bL9 from Chlorobaculum tepidum (strain ATCC 49652 / DSM 12025 / NBRC 103806 / TLS) (Chlorobium tepidum).